Here is a 141-residue protein sequence, read N- to C-terminus: Small ribosomal subunit protein uS8c (141 aa).

The protein belongs to the universal ribosomal protein uS8 family. Part of the 30S ribosomal subunit.

It is found in the plastid. It localises to the chloroplast. Its function is as follows. One of the primary rRNA binding proteins, it binds directly to 16S rRNA central domain where it helps coordinate assembly of the platform of the 30S subunit. This chain is Small ribosomal subunit protein uS8c (rps8), found in Pleurastrum terricola (Filamentous green alga).